The following is a 57-amino-acid chain: Large ribosomal subunit protein bL33 (57 aa).

This sequence belongs to the bacterial ribosomal protein bL33 family.

The protein is Large ribosomal subunit protein bL33 of Shewanella amazonensis (strain ATCC BAA-1098 / SB2B).